Here is a 152-residue protein sequence, read N- to C-terminus: MTKERTFIAIKPDGVQRGYVSEIIGRFEKKGFKLVGLKQLIPSKELAQNHYGVHRERPFFGDLVDFISSGPVVAMVWEGEGVILSARKLIGSTKPLEAEPGTIRGDLAIDIGRNIIHGSDGEDTAKFEIDLWFNEEELCEWETSDLKWRSEN.

Residues Lys11, Phe59, Arg87, Thr93, Arg104, and Asn114 each coordinate ATP. His117 serves as the catalytic Pros-phosphohistidine intermediate.

Belongs to the NDK family. As to quaternary structure, homotetramer. It depends on Mg(2+) as a cofactor.

Its subcellular location is the cytoplasm. The catalysed reaction is a 2'-deoxyribonucleoside 5'-diphosphate + ATP = a 2'-deoxyribonucleoside 5'-triphosphate + ADP. The enzyme catalyses a ribonucleoside 5'-diphosphate + ATP = a ribonucleoside 5'-triphosphate + ADP. Major role in the synthesis of nucleoside triphosphates other than ATP. The ATP gamma phosphate is transferred to the NDP beta phosphate via a ping-pong mechanism, using a phosphorylated active-site intermediate. This Prochlorococcus marinus (strain MIT 9301) protein is Nucleoside diphosphate kinase.